Reading from the N-terminus, the 266-residue chain is Phage-like element PBSX protein XkdC (266 aa).

124 to 131 (GQPGSGKT) is a binding site for ATP.

It to B.subtilis YqaM.

In terms of biological role, may function as a transcriptional antiterminator. The chain is Phage-like element PBSX protein XkdC (xkdC) from Bacillus subtilis (strain 168).